The chain runs to 602 residues: General amino-acid permease GAP1 (602 aa).

Residues 1 to 95 (MSNTSSYEKN…LKHHLKNRHL (95 aa)) are Cytoplasmic-facing. Lys-76 participates in a covalent cross-link: Glycyl lysine isopeptide (Lys-Gly) (interchain with G-Cter in ubiquitin). The chain crosses the membrane as a helical span at residues 96 to 116 (QMIAIGGAIGTGLLVGSGTAL). Topologically, residues 117–121 (RTGGP) are extracellular. A helical membrane pass occupies residues 122 to 142 (ASLLIGWGSTGTMIYAMVMAL). At 143-165 (GELAVIFPISGGFTTYATRFIDE) the chain is on the cytoplasmic side. The helical transmembrane segment at 166–185 (SFGYANNFNYMLQWLVVLPL) threads the bilayer. Topologically, residues 186–204 (EIVSASITVNFWGTDPKYR) are extracellular. A helical transmembrane segment spans residues 205–224 (DGFVALFWLAIVIINMFGVK). The Cytoplasmic portion of the chain corresponds to 225-237 (GYGEAEFVFSFIK). The chain crosses the membrane as a helical span at residues 238–256 (VITVVGFIILGIILNCGGG). Residues 257–280 (PTGGYIGGKYWHDPGAFAGDTPGA) are Extracellular-facing. The helical transmembrane segment at 281-298 (KFKGVCSVFVTAAFSFAG) threads the bilayer. The Cytoplasmic portion of the chain corresponds to 299–321 (SELVGLAASESVEPRKSVPKAAK). Residues 322-342 (QVFWRITLFYILSLLMIGLLV) form a helical membrane-spanning segment. The Extracellular portion of the chain corresponds to 343–376 (PYNDKSLIGASSVDAAASPFVIAIKTHGIKGLPS). The chain crosses the membrane as a helical span at residues 377–396 (VVNVVILIAVLSVGNSAIYA). Residues 397–421 (CSRTMVALAEQRFLPEIFSYVDRKG) lie on the Cytoplasmic side of the membrane. Residues 422–442 (RPLVGIAVTSAFGLIAFVAAS) form a helical membrane-spanning segment. At 443–451 (KKEGEVFNW) the chain is on the extracellular side. Residues 452 to 472 (LLALSGLSSLFTWGGICICHI) traverse the membrane as a helical segment. Over 473 to 491 (RFRKALAAQGRGLDELSFK) the chain is Cytoplasmic. The chain crosses the membrane as a helical span at residues 492 to 510 (SPTGVWGSYWGLFMVIIMF). Over 511–529 (IAQFYVAVFPVGDSPSAEG) the chain is Extracellular. A helical membrane pass occupies residues 530–548 (FFEAYLSFPLVMVMYIGHK). The Cytoplasmic portion of the chain corresponds to 549–602 (IYKRNWKLFIPAEKMDIDTGRREVDLDLLKQEIAEEKAIMATKPRWYRIWNFWC).

Belongs to the amino acid-polyamine-organocation (APC) superfamily. YAT (TC 2.A.3.10) family. Active permease is phosphorylated. The addition of glutamine causes rapid dephosphorylation and inactivation of the permease. In terms of processing, ubiquitination by RSP5 and the RSP5-associated proteins BUL1 and BUL2, leads the addition of poly-ubiquitin chains being specifically formed by linkage through the lysine 63 residue of ubiquitin and mediates ammonium-induced endocytosis and degradation in the vacuole.

The protein localises to the cell membrane. It is found in the endoplasmic reticulum membrane. General amino-acid permease involved in the uptake of all the naturally occurring L-amino-acids, related compounds such as ornithine and citrulline, some D-amino acids, toxic amino acid analogs such as azetidine-2-carboxylate, and the polyamines putrescine and spermidine. Senses its transport substrates to set an appropriate level of transporter activity at the cell surface. Required for FLO11 expression and invasive growth. The polypeptide is General amino-acid permease GAP1 (Saccharomyces cerevisiae (strain ATCC 204508 / S288c) (Baker's yeast)).